The following is a 225-amino-acid chain: Ribonuclease 3 (225 aa).

Positions 4 to 133 (FEKLEKLLGY…LIAAIYLDSN (130 aa)) constitute an RNase III domain. Position 46 (Glu46) interacts with Mg(2+). Asp50 is a catalytic residue. Mg(2+) is bound by residues Asn119 and Glu122. Glu122 is a catalytic residue. The 68-residue stretch at 158-225 (DPKTALQEWA…AARKLLHKLK (68 aa)) folds into the DRBM domain.

Belongs to the ribonuclease III family. In terms of assembly, homodimer. Mg(2+) is required as a cofactor.

It localises to the cytoplasm. The enzyme catalyses Endonucleolytic cleavage to 5'-phosphomonoester.. In terms of biological role, digests double-stranded RNA. Involved in the processing of primary rRNA transcript to yield the immediate precursors to the large and small rRNAs (23S and 16S). Processes some mRNAs, and tRNAs when they are encoded in the rRNA operon. Processes pre-crRNA and tracrRNA of type II CRISPR loci if present in the organism. The chain is Ribonuclease 3 from Rickettsia felis (strain ATCC VR-1525 / URRWXCal2) (Rickettsia azadi).